Consider the following 435-residue polypeptide: UDP-glucuronic acid decarboxylase 1 (435 aa).

Positions 1-33 (MKQLHKQMSSKRDEETIPMSQSSPYSPKTLKHP) are disordered. At 1–48 (MKQLHKQMSSKRDEETIPMSQSSPYSPKTLKHPRSLPRSLHYLFREQR) the chain is on the cytoplasmic side. A helical; Signal-anchor for type II membrane protein transmembrane segment spans residues 49 to 69 (LLFILVGILIGSTFFILQPSL). Residues 70–435 (SRLGAAESTS…ILNEDEGKGL (366 aa)) are Lumenal-facing. Residues 91 to 100 (DSPPSRSTFN) show a composition bias toward polar residues. The segment at 91–110 (DSPPSRSTFNSGGGGGRTGR) is disordered. NAD(+) contacts are provided by glycine 129, phenylalanine 130, valine 131, aspartate 150, asparagine 151, phenylalanine 153, threonine 154, glycine 155, aspartate 175, and valine 176. Isoleucine 180 serves as a coordination point for UDP-alpha-D-glucuronate. Leucine 190 contacts NAD(+). Lysine 208 is a UDP-alpha-D-glucuronate binding site. Threonine 209 serves as a coordination point for NAD(+). 4 residues coordinate UDP-alpha-D-glucuronate: asparagine 216, glycine 219, lysine 222, and arginine 223. The NAD(+) site is built by tyrosine 262 and lysine 266. Tyrosine 262 acts as the Proton acceptor in catalysis. UDP-alpha-D-glucuronate is bound at residue tyrosine 276. Residues threonine 292 and arginine 303 each coordinate NAD(+). Residues 380–401 (EFKPNTADDPHKRKPDISKAKE) are disordered. A compositionally biased stretch (basic and acidic residues) spans 385-401 (TADDPHKRKPDISKAKE).

This sequence belongs to the NAD(P)-dependent epimerase/dehydratase family. UDP-glucuronic acid decarboxylase subfamily. Requires NAD(+) as cofactor. As to expression, ubiquitous.

The protein localises to the golgi apparatus. It localises to the golgi stack membrane. It carries out the reaction UDP-alpha-D-glucuronate + H(+) = UDP-alpha-D-xylose + CO2. It participates in nucleotide-sugar biosynthesis; UDP-alpha-D-xylose biosynthesis; UDP-alpha-D-xylose from UDP-alpha-D-glucuronate: step 1/1. In terms of biological role, catalyzes the NAD-dependent decarboxylation of UDP-glucuronic acid to UDP-xylose. Necessary for the biosynthesis of the core tetrasaccharide in glycosaminoglycan biosynthesis. The chain is UDP-glucuronic acid decarboxylase 1 from Arabidopsis thaliana (Mouse-ear cress).